Consider the following 130-residue polypeptide: Phosphoribosyl-AMP cyclohydrolase (130 aa).

Residue Asp77 participates in Mg(2+) binding. Cys78 lines the Zn(2+) pocket. The Mg(2+) site is built by Asp79 and Asp81. The Zn(2+) site is built by Cys95 and Cys102.

This sequence belongs to the PRA-CH family. Homodimer. Mg(2+) serves as cofactor. It depends on Zn(2+) as a cofactor.

It is found in the cytoplasm. The catalysed reaction is 1-(5-phospho-beta-D-ribosyl)-5'-AMP + H2O = 1-(5-phospho-beta-D-ribosyl)-5-[(5-phospho-beta-D-ribosylamino)methylideneamino]imidazole-4-carboxamide. It functions in the pathway amino-acid biosynthesis; L-histidine biosynthesis; L-histidine from 5-phospho-alpha-D-ribose 1-diphosphate: step 3/9. Its function is as follows. Catalyzes the hydrolysis of the adenine ring of phosphoribosyl-AMP. The chain is Phosphoribosyl-AMP cyclohydrolase from Pseudomonas putida (strain W619).